The sequence spans 165 residues: Small ribosomal subunit protein bS16 (165 aa).

The protein belongs to the bacterial ribosomal protein bS16 family.

The chain is Small ribosomal subunit protein bS16 from Azobacteroides pseudotrichonymphae genomovar. CFP2.